A 510-amino-acid polypeptide reads, in one-letter code: Allene oxide synthase 2, chloroplastic (510 aa).

The N-terminal 31 residues, 1 to 31, are a transit peptide targeting the chloroplast; that stretch reads MALTLSFSLPLPSLHQKIPSKYSTFRPIIVS. Heme b-binding residues include lysine 127, histidine 158, and lysine 162. Positions 315 and 321 each coordinate (13S)-hydroperoxy-(9Z,11E)-octadecadienoate. Asparagine 315 is a (13S)-hydroperoxy-(9Z,11E,15Z)-octadecatrienoate binding site. Heme b is bound by residues lysine 463 and cysteine 465.

Belongs to the cytochrome P450 family. Heme b serves as cofactor. In terms of tissue distribution, expressed in flower buds, leaves, roots, stems, petioles and cotyledons. Not detected in ripe fruits. Expressed in sieve elements.

The protein resides in the plastid. Its subcellular location is the chloroplast inner membrane. It carries out the reaction (13S)-hydroperoxy-(9Z,11E,15Z)-octadecatrienoate = (9Z,13S,15Z)-12,13-epoxyoctadeca-9,11,15-trienoate + H2O. The enzyme catalyses (13S)-hydroperoxy-(9Z,11E)-octadecadienoate = (9Z,13S)-12,13-epoxyoctadeca-9,11-dienoate + H2O. Its function is as follows. Cytochrome P450 of the CYP74A subfamily involved in the biosynthesis of jasmonic acid from lipoxygenase-derived hydroperoxides of free fatty acids. Catalyzes the synthesis of unstable allene oxide, which is further converted spontaneously by hydrolysis or cyclization. Metabolizes 13- but not 9-hydroperoxides of linoleic and linolenic acids. Can use 15S-hydroperoxy-11(Z),13(E),17(Z)-eicosatrienoic acid (15-HPET) and 13S-hydroperoxy-9(Z),11(E),15(Z)-octadecatrienoic acid (13-HPOT) as substrates, but only 50% activity with 13S-hydroperoxy-9(Z),11(E)-octadecadienoic acid (13-HPOD). This chain is Allene oxide synthase 2, chloroplastic, found in Solanum lycopersicum (Tomato).